The following is a 426-amino-acid chain: Probable inactive metalloprotease YmfF (426 aa).

Positions 50 and 138 each coordinate Zn(2+).

This sequence belongs to the peptidase M16 family.

The protein is Probable inactive metalloprotease YmfF (ymfF) of Bacillus subtilis (strain 168).